Consider the following 352-residue polypeptide: Holliday junction branch migration complex subunit RuvB (352 aa).

The interval 1-42 is disordered; sequence MAIVSSSAGRADSQPPAAKSRVVDASPLPEEASPAREDGLRP. Positions 13-201 are large ATPase domain (RuvB-L); sequence SQPPAAKSRV…FGLIQRLEFY (189 aa). The segment covering 33 to 42 has biased composition (basic and acidic residues); sequence SPAREDGLRP. ATP is bound by residues L40, R41, G82, K85, T86, T87, R191, Y201, and R238. T86 is a Mg(2+) binding site. The small ATPAse domain (RuvB-S) stretch occupies residues 202–273; it reads GLEDLQAIVE…LVDEALTLHR (72 aa). Positions 276 to 352 are head domain (RuvB-H); it reads ARGLDASDRR…RRHLGWPELP (77 aa). 2 residues coordinate DNA: R331 and R336.

The protein belongs to the RuvB family. In terms of assembly, homohexamer. Forms an RuvA(8)-RuvB(12)-Holliday junction (HJ) complex. HJ DNA is sandwiched between 2 RuvA tetramers; dsDNA enters through RuvA and exits via RuvB. An RuvB hexamer assembles on each DNA strand where it exits the tetramer. Each RuvB hexamer is contacted by two RuvA subunits (via domain III) on 2 adjacent RuvB subunits; this complex drives branch migration. In the full resolvosome a probable DNA-RuvA(4)-RuvB(12)-RuvC(2) complex forms which resolves the HJ.

The protein localises to the cytoplasm. The enzyme catalyses ATP + H2O = ADP + phosphate + H(+). The RuvA-RuvB-RuvC complex processes Holliday junction (HJ) DNA during genetic recombination and DNA repair, while the RuvA-RuvB complex plays an important role in the rescue of blocked DNA replication forks via replication fork reversal (RFR). RuvA specifically binds to HJ cruciform DNA, conferring on it an open structure. The RuvB hexamer acts as an ATP-dependent pump, pulling dsDNA into and through the RuvAB complex. RuvB forms 2 homohexamers on either side of HJ DNA bound by 1 or 2 RuvA tetramers; 4 subunits per hexamer contact DNA at a time. Coordinated motions by a converter formed by DNA-disengaged RuvB subunits stimulates ATP hydrolysis and nucleotide exchange. Immobilization of the converter enables RuvB to convert the ATP-contained energy into a lever motion, pulling 2 nucleotides of DNA out of the RuvA tetramer per ATP hydrolyzed, thus driving DNA branch migration. The RuvB motors rotate together with the DNA substrate, which together with the progressing nucleotide cycle form the mechanistic basis for DNA recombination by continuous HJ branch migration. Branch migration allows RuvC to scan DNA until it finds its consensus sequence, where it cleaves and resolves cruciform DNA. The polypeptide is Holliday junction branch migration complex subunit RuvB (Prochlorococcus marinus (strain MIT 9313)).